Consider the following 138-residue polypeptide: Small ribosomal subunit protein uS11c (138 aa).

Positions 1 to 24 are disordered; the sequence is MAKAIPRSGSRRSGRIGSRKSTRR. Residues 9 to 24 are compositionally biased toward basic residues; sequence GSRRSGRIGSRKSTRR.

This sequence belongs to the universal ribosomal protein uS11 family. Part of the 30S ribosomal subunit.

The protein resides in the plastid. The protein localises to the chloroplast. The sequence is that of Small ribosomal subunit protein uS11c from Panax ginseng (Korean ginseng).